Here is a 374-residue protein sequence, read N- to C-terminus: UPF0496 protein At4g34320 (374 aa).

2 helical membrane passes run Ile215 to Ala235 and Pro238 to Ile258.

Belongs to the UPF0496 family.

It is found in the membrane. The sequence is that of UPF0496 protein At4g34320 from Arabidopsis thaliana (Mouse-ear cress).